Consider the following 1922-residue polypeptide: Endoribonuclease Dicer (1922 aa).

The region spanning 51–227 (LLEAALDHNT…ELEEKIQKLE (177 aa)) is the Helicase ATP-binding domain. Residue 64-71 (LNTGSGKT) coordinates ATP. The DECH box signature appears at 175–178 (DECH). Residues 256–595 (DCGPFTDRSG…LRNKCSKSVD (340 aa)) are required for interaction with PRKRA and TARBP2. The segment at 409-433 (YVSWSDSEDDDEDEEIEEKEKPETN) is disordered. A phosphoserine mark is found at Ser413 and Ser415. A compositionally biased stretch (acidic residues) spans 414–425 (DSEDDDEDEEIE). A Helicase C-terminal domain is found at 433–602 (NFPSPFTNIL…SVDTGETDID (170 aa)). A Dicer dsRNA-binding fold domain is found at 630–722 (AIGHINRYCA…MPVGKETVKY (93 aa)). The PAZ domain occupies 895-1042 (KFMEDIEKSE…LVPELCAIHP (148 aa)). Phosphoserine occurs at positions 1016 and 1160. The RNase III 1 domain occupies 1276–1403 (DSEQSPSIGY…TDKWEKDEMT (128 aa)). Positions 1316, 1395, and 1398 each coordinate Mg(2+). Ser1460, Ser1468, and Ser1470 each carry phosphoserine. An RNase III 2 domain is found at 1666–1824 (FENFEKKINY…LAGAIYMDSG (159 aa)). Mg(2+) is bound by residues Glu1705, Asp1810, and Glu1813. In terms of domain architecture, DRBM spans 1849-1914 (VPRSPVRELL…ARRALRSLKA (66 aa)). Phosphoserine is present on Ser1868.

This sequence belongs to the helicase family. Dicer subfamily. In terms of assembly, component of the RISC loading complex (RLC), or micro-RNA (miRNA) loading complex (miRLC), which is composed of DICER1, AGO2 and TARBP2; DICER1 and TARBP2 are required to process precursor miRNAs (pre-miRNAs) to mature miRNAs and then load them onto AGO2. Note that the trimeric RLC/miRLC is also referred to as RISC. Interacts with DHX9, AGO1, PIWIL1 and PRKRA. Associates with the 60S ribosome. Interacts with BCDIN3D. Interacts with AGO2, TARBP2, EIF6, MOV10 and RPL7A (60S ribosome subunit); they form a large RNA-induced silencing complex (RISC). Interacts (via Dicer dsRNA-binding fold domain) with ALOX5 (via PLAT domain); this interaction enhances arachidonate 5-lipoxygenase activity and modifies the miRNA precursor processing activity of DICER1. As to quaternary structure, (Microbial infection) Interacts with ebolavirus transcriptional activator VP30; this interaction prevents TARBP2/TRBP binding to DICER1 and thus allows the virus to counteract host RNA silencing. (Microbial infection) Interacts with ebolavirus transcriptional activator VP35; this interaction prevents TARBP2/TRBP binding to DICER1 and thus allows the virus to counteract host RNA silencing. It depends on Mg(2+) as a cofactor. Requires Mn(2+) as cofactor.

The protein localises to the cytoplasm. The protein resides in the perinuclear region. It catalyses the reaction Endonucleolytic cleavage to 5'-phosphomonoester.. Its function is as follows. Double-stranded RNA (dsRNA) endoribonuclease playing a central role in short dsRNA-mediated post-transcriptional gene silencing. Cleaves naturally occurring long dsRNAs and short hairpin pre-microRNAs (miRNA) into fragments of twenty-one to twenty-three nucleotides with 3' overhang of two nucleotides, producing respectively short interfering RNAs (siRNA) and mature microRNAs. SiRNAs and miRNAs serve as guide to direct the RNA-induced silencing complex (RISC) to complementary RNAs to degrade them or prevent their translation. Gene silencing mediated by siRNAs, also called RNA interference, controls the elimination of transcripts from mobile and repetitive DNA elements of the genome but also the degradation of exogenous RNA of viral origin for instance. The miRNA pathway on the other side is a mean to specifically regulate the expression of target genes. This Homo sapiens (Human) protein is Endoribonuclease Dicer (DICER1).